Reading from the N-terminus, the 599-residue chain is MKTQNYDESKIITLSSLEHIRLRSGMYIGRLGDGSNIDDGIYVLIKEIIDNSIDEFIMGYGNEIFIKKENNLISIRDYGRGIPLGKVIESVSVINTGAKYNDDVFQFSVGLNGVGTKAVNALSSKFLVRSTRNGKSFEALFSKGKLLESREIKSSDKDGTYVEFLADSEIFGKYSYSEDFLKRRFFHYACLNKGLIINYNDQIFESKNGLLDFLNSEIKSDDLLYDIVYYSSKTLEFAFSHTNNYGETYFSFVNGQYTNDGGTHQTGFREGFVRAINDFLKKTYSSTDIREGLVATLSVKIKDPIFESQTKNKLGNIETRGNVAKEVQKIISEILYKDKILAKLIEKKVVDNERLRKELSSVRKEARERAKKISFKIPKLKDCKFHFNDSSKQSEQTMIFLTEGDSATGSMVSCRDVYTQAIFSLRGKPQNMFEKNKSEIYKNEELYNMMVALGIEESIENLRYNKVVIATDADFDGFHIRNLLLTFFLTFFEDLILNGHMYILETPLFRVRNKKITTYCYSEEEKQKAILELKGGCEVTRFKGLGEISPNEFKGFIDINSIKLTKVDLFNIKEIKEKLGFYMGQNTPERRNFIMENLI.

ATP-binding positions include tyrosine 6, asparagine 51, aspartate 77, 110–116 (GLNGVGT), and lysine 311. A Toprim domain is found at 397–507 (TMIFLTEGDS…NGHMYILETP (111 aa)). Residues glutamate 403, aspartate 472, and aspartate 474 each coordinate Mg(2+).

Belongs to the type II topoisomerase family. As to quaternary structure, heterotetramer composed of ParC and ParE. It depends on Mg(2+) as a cofactor. Mn(2+) serves as cofactor. Requires Ca(2+) as cofactor.

The enzyme catalyses ATP-dependent breakage, passage and rejoining of double-stranded DNA.. Topoisomerase IV is essential for chromosome segregation. It relaxes supercoiled DNA. Performs the decatenation events required during the replication of a circular DNA molecule. This chain is DNA topoisomerase 4 subunit B (parE), found in Borreliella burgdorferi (strain ATCC 35210 / DSM 4680 / CIP 102532 / B31) (Borrelia burgdorferi).